We begin with the raw amino-acid sequence, 119 residues long: Large ribosomal subunit protein uL24 (119 aa).

This sequence belongs to the universal ribosomal protein uL24 family. As to quaternary structure, part of the 50S ribosomal subunit.

In terms of biological role, one of two assembly initiator proteins, it binds directly to the 5'-end of the 23S rRNA, where it nucleates assembly of the 50S subunit. Functionally, one of the proteins that surrounds the polypeptide exit tunnel on the outside of the subunit. This is Large ribosomal subunit protein uL24 from Clavibacter michiganensis subsp. michiganensis (strain NCPPB 382).